The following is a 548-amino-acid chain: Natural resistance-associated macrophage protein 1 (548 aa).

The tract at residues 1 to 38 (MSGDTGPPKQGGTRYGSISSPPSPEPQQAPPGGTYLSE) is disordered. Residues 1-55 (MSGDTGPPKQGGTRYGSISSPPSPEPQQAPPGGTYLSEKIPIPDTESGTFSLRKL) are Cytoplasmic-facing. The chain crosses the membrane as a helical span at residues 56 to 73 (WAFTGPGFLMSIAFLDPG). At 74–82 (NIESDLQAG) the chain is on the extracellular side. Residues 83–102 (AVAGFKLLWVLLWATVLGLL) traverse the membrane as a helical segment. Over 103 to 139 (CQRLAARLGVVTGKDLGEVCHLYYPKVPRILLWLTIE) the chain is Cytoplasmic. A helical membrane pass occupies residues 140–160 (LAIVGSDMQEVIGTAIAFSLL). Over 161–164 (SAGR) the chain is Extracellular. The chain crosses the membrane as a helical span at residues 165–184 (IPLWGGVLITVVDTFFFLFL). Topologically, residues 185–193 (DNYGLRKLE) are cytoplasmic. A helical transmembrane segment spans residues 194 to 214 (AFFGFLITIMALTFGYEYVVA). Residues 215-237 (QPAQGALLQGLFLPSCPGCGQPE) are Extracellular-facing. A helical membrane pass occupies residues 238 to 256 (LLQAVGIIGAIIMPHNIYL). Topologically, residues 257–284 (HSSLVKSREVDRSRRADIREANMYFLIE) are cytoplasmic. A helical membrane pass occupies residues 285–304 (ATIALSVSFLINLFVMAVFG). The Extracellular segment spans residues 305 to 346 (QAFYKQTNQAAFNICADSSLHDYAPIFPRNNLTVAVDIYQGG). The N-linked (GlcNAc...) asparagine glycan is linked to Asn-335. The chain crosses the membrane as a helical span at residues 347–366 (VILGCLFGPPALYIWAVGLL). At 367–397 (AAGQSSTMTGTYAGQFVMEGFLKLRWSRFAR) the chain is on the cytoplasmic side. The helical transmembrane segment at 398 to 415 (VLLTRSCAILPTVLLAVF) threads the bilayer. The Extracellular portion of the chain corresponds to 416-426 (RDLRDLSGLND). Residues 427-447 (LLNVLQSLLLPFAVLPILTFT) form a helical membrane-spanning segment. Over 448-463 (SMPALMQEFANGLVSK) the chain is Cytoplasmic. The helical transmembrane segment at 464–485 (VITSSIMVLVCAVNLYFVISYL) threads the bilayer. The Extracellular segment spans residues 486–493 (PSLPHPAY). Residues 494–513 (FSLVALLAAAYLGLTTYLVW) traverse the membrane as a helical segment. Topologically, residues 514–548 (TCLITQGATLLAHSSHQRFLYGLPEEDQEKGRTSG) are cytoplasmic.

It belongs to the NRAMP family.

Its subcellular location is the late endosome membrane. The protein resides in the lysosome membrane. The enzyme catalyses Zn(2+)(in) + H(+)(out) = Zn(2+)(out) + H(+)(in). It catalyses the reaction Fe(2+)(in) + H(+)(out) = Fe(2+)(out) + H(+)(in). It carries out the reaction Mn(2+)(in) + H(+)(out) = Mn(2+)(out) + H(+)(in). Macrophage-specific antiporter that fluxes metal ions in either direction against a proton gradient. Localized to late endosomal lysosomal membranes, delivers bivalent cations from the cytosol into these acidic compartments where they may directly affect antimicrobial activity. Involved in iron metabolism and host natural resistance to infection with intracellular parasites. Pathogen resistance involves sequestration of Fe(2+) and Mn(2+), cofactors of both prokaryotic and eukaryotic catalases and superoxide dismutases, not only to protect the macrophage against its own generation of reactive oxygen species, but to deny the cations to the pathogen for synthesis of its protective enzymes. The polypeptide is Natural resistance-associated macrophage protein 1 (SLC11A1) (Bos taurus (Bovine)).